We begin with the raw amino-acid sequence, 234 residues long: Probable chemoreceptor glutamine deamidase CheD (234 aa).

It belongs to the CheD family.

The enzyme catalyses L-glutaminyl-[protein] + H2O = L-glutamyl-[protein] + NH4(+). Functionally, probably deamidates glutamine residues to glutamate on methyl-accepting chemotaxis receptors (MCPs), playing an important role in chemotaxis. This is Probable chemoreceptor glutamine deamidase CheD from Burkholderia pseudomallei (strain 1710b).